The chain runs to 901 residues: Protein translocase subunit SecA (901 aa).

Residues glutamine 87, 105 to 109 (GEGKT), and aspartate 512 contribute to the ATP site. Positions 852-901 (AQMQQLSHQSDDEAAAEDLAAQTGERKVGRNDPCPCGSGKKYKQCHGRLS) are disordered. Zn(2+) contacts are provided by cysteine 885, cysteine 887, cysteine 896, and histidine 897. The segment covering 891–901 (KKYKQCHGRLS) has biased composition (basic residues).

The protein belongs to the SecA family. In terms of assembly, monomer and homodimer. Part of the essential Sec protein translocation apparatus which comprises SecA, SecYEG and auxiliary proteins SecDF-YajC and YidC. Zn(2+) serves as cofactor.

The protein resides in the cell inner membrane. Its subcellular location is the cytoplasm. The catalysed reaction is ATP + H2O + cellular proteinSide 1 = ADP + phosphate + cellular proteinSide 2.. Functionally, part of the Sec protein translocase complex. Interacts with the SecYEG preprotein conducting channel. Has a central role in coupling the hydrolysis of ATP to the transfer of proteins into and across the cell membrane, serving both as a receptor for the preprotein-SecB complex and as an ATP-driven molecular motor driving the stepwise translocation of polypeptide chains across the membrane. The polypeptide is Protein translocase subunit SecA (Klebsiella pneumoniae (strain 342)).